The chain runs to 595 residues: 73 kDa paraflagellar rod protein (595 aa).

Positions 294–317 are disordered; the sequence is DAEATKRHAANKEKSDRYIRENED. Positions 317–337 are calmodulin-binding; that stretch reads DRQEETWNKIQDLERQLQKLG.

Heterodimer of a 69 kDa and a 73 kDa protein.

The protein resides in the cell projection. The protein localises to the cilium. It is found in the flagellum. Its subcellular location is the cytoplasm. It localises to the cytoskeleton. Functionally, major component of the paraflagellar rod (PFR). The PFR is a highly ordered lattices of fibrous proteins that are located inside the flagellum and assume a fixed orientation with respect to the microtubular axoneme. The chain is 73 kDa paraflagellar rod protein (PFRC) from Trypanosoma brucei brucei.